A 523-amino-acid polypeptide reads, in one-letter code: uncharacterized protein (523 aa).

Over residues 1 to 14 (MAVSKNIKSNVSTH) the composition is skewed to polar residues. Disordered regions lie at residues 1-36 (MAVS…VKKA), 51-187 (HSSE…VVSS), and 200-224 (QKQE…EMEK). Basic and acidic residues predominate over residues 87–97 (DNRGTRLKGDI). 2 stretches are compositionally biased toward acidic residues: residues 117-130 (DMEE…DNEY) and 138-182 (QDDD…DDEN). Residues 200-210 (QKQEKEEEKQP) show a composition bias toward basic and acidic residues.

The protein belongs to the AATF family.

This is an uncharacterized protein from Dictyostelium discoideum (Social amoeba).